Reading from the N-terminus, the 212-residue chain is Uracil phosphoribosyltransferase (212 aa).

5-phospho-alpha-D-ribose 1-diphosphate-binding positions include arginine 78, arginine 103, and aspartate 130–serine 138. Uracil is bound by residues isoleucine 193 and glycine 198–alanine 200. Residue aspartate 199 participates in 5-phospho-alpha-D-ribose 1-diphosphate binding.

This sequence belongs to the UPRTase family. Requires Mg(2+) as cofactor.

It catalyses the reaction UMP + diphosphate = 5-phospho-alpha-D-ribose 1-diphosphate + uracil. The protein operates within pyrimidine metabolism; UMP biosynthesis via salvage pathway; UMP from uracil: step 1/1. Its activity is regulated as follows. Allosterically activated by GTP. Catalyzes the conversion of uracil and 5-phospho-alpha-D-ribose 1-diphosphate (PRPP) to UMP and diphosphate. This is Uracil phosphoribosyltransferase from Bordetella avium (strain 197N).